The chain runs to 338 residues: Arginine N-succinyltransferase subunit alpha (338 aa).

The protein belongs to the succinylarginine dihydrolase family. As to quaternary structure, heterotetramer of two alpha and two beta subunits.

The catalysed reaction is succinyl-CoA + L-arginine = N(2)-succinyl-L-arginine + CoA + H(+). It participates in amino-acid degradation; L-arginine degradation via AST pathway; L-glutamate and succinate from L-arginine: step 1/5. Catalyzes the transfer of succinyl-CoA to arginine to produce N(2)-succinylarginine. Also acts on L-ornithine. The polypeptide is Arginine N-succinyltransferase subunit alpha (astA) (Pseudomonas aeruginosa (strain ATCC 15692 / DSM 22644 / CIP 104116 / JCM 14847 / LMG 12228 / 1C / PRS 101 / PAO1)).